Reading from the N-terminus, the 398-residue chain is uncharacterized protein (398 aa).

The next 6 membrane-spanning stretches (helical) occupy residues 37–57, 92–112, 122–142, 186–206, 228–248, and 268–288; these read LVIL…FVQF, IFNA…FIFG, LLTL…SYIP, LFYG…ILII, IGGI…VIGT, and FGVA…NIVL.

The protein localises to the cell membrane. This is an uncharacterized protein from Mycoplasma genitalium (strain ATCC 33530 / DSM 19775 / NCTC 10195 / G37) (Mycoplasmoides genitalium).